Reading from the N-terminus, the 370-residue chain is Natural killer cell receptor 2B4 (370 aa).

An N-terminal signal peptide occupies residues 1–21; the sequence is MLGQVVTLILLLLLKVYQGKG. Ig-like domains are found at residues 22–127 and 131–215; these read CQGS…FVFE and PDKV…LNLT. The Extracellular portion of the chain corresponds to 22-229; sequence CQGSADHVVS…NAHQEFRFWP (208 aa). 8 N-linked (GlcNAc...) asparagine glycosylation sites follow: asparagine 71, asparagine 77, asparagine 89, asparagine 164, asparagine 181, asparagine 192, asparagine 200, and asparagine 213. Cysteine 157 and cysteine 199 are disulfide-bonded. Residues 230 to 250 traverse the membrane as a helical segment; it reads FLVIIVILSALFLGTLACFCV. Residues 251-370 are Cytoplasmic-facing; it reads WRRKRKEKQS…KELENFDVYS (120 aa). Short sequence motifs (ITSM) lie at residues 269–274, 295–300, 315–320, and 340–345; these read TIYEDV, TIYSMI, TLYSLI, and TIYEVI. Tyrosine 271 bears the Phosphotyrosine mark. Residue tyrosine 297 is modified to Phosphotyrosine; by FYN. Tyrosine 317 carries the phosphotyrosine modification. The segment at 324–370 is disordered; sequence RKSGSRKRNHSPSFNSTIYEVIGKSQPKAQNPARLSRKELENFDVYS. The residue at position 342 (tyrosine 342) is a Phosphotyrosine; by FYN.

Interacts with CD48. Interacts (via phosphorylated ITSM 1-4) with SH2D1A (via SH2 domain); SH2D1A probably mediates association with FYN. Interacts (via phosphorylated ITSM 3) with PTPN11/SHP-2, INPP5D/SHIP1, PTPN6/SHP-1 and CSK; binding of SH2D1A/SAP prevents association with PTPN11, PTPN6 and CSK; conflictingly a similar association has been described for phosphorylated ITSM 1 also including GRB2 and PLCG1. Interacts weakly (via phosphorylated ITSM 2) with PTPN11/SHP-2 and CSK. Interacts with SH2D1B. Interacts with PIK3R1; PI3K recruits SH2D1A. Interacts with MHC class I proteins; the interaction is proposed to prevent self-killing of NK cells. In terms of processing, N-linked glycosylation is essential for the binding to its ligand CD48. Also O-glycosylated, in contrast, O-linked sialylation has a negative impact on ligand binding. Phosphorylated by FYN and CSK on tyrosine residues following activation. Coligation with inhibitory receptors such as KIR2DL1 inhibits phosphorylation upon contact of NK cells with sensitive target cells. As to expression, expressed in spleen, PBL, followed by lung, liver, testis and small intestine. Expressed in all natural killer (NK) cells, monocytes and basophils, TCR-gamma/delta+ T-cells, monocytes, basophils, and on a subset of CD8(+) T-cells.

Its subcellular location is the membrane. It localises to the cell membrane. It is found in the membrane raft. In terms of biological role, heterophilic receptor of the signaling lymphocytic activation molecule (SLAM) family; its ligand is CD48. SLAM receptors triggered by homo- or heterotypic cell-cell interactions are modulating the activation and differentiation of a wide variety of immune cells and thus are involved in the regulation and interconnection of both innate and adaptive immune response. Activities are controlled by presence or absence of small cytoplasmic adapter proteins, SH2D1A/SAP and/or SH2D1B/EAT-2. Acts as activating natural killer (NK) cell receptor. Activating function implicates association with SH2D1A and FYN. Downstreaming signaling involves predominantly VAV1, and, to a lesser degree, INPP5D/SHIP1 and CBL. Signal attenuation in the absence of SH2D1A is proposed to be dependent on INPP5D and to a lesser extent PTPN6/SHP-1 and PTPN11/SHP-2. Stimulates NK cell cytotoxicity, production of IFN-gamma and granule exocytosis. Optimal expansion and activation of NK cells seems to be dependent on the engagement of CD244 with CD48 expressed on neighboring NK cells. Acts as costimulator in NK activation by enhancing signals by other NK receptors such as NCR3 and NCR1. At early stages of NK cell differentiation may function as an inhibitory receptor possibly ensuring the self-tolerance of developing NK cells. Involved in the regulation of CD8(+) T-cell proliferation; expression on activated T-cells and binding to CD48 provides costimulatory-like function for neighboring T-cells. Inhibits inflammatory responses in dendritic cells (DCs). The polypeptide is Natural killer cell receptor 2B4 (CD244) (Homo sapiens (Human)).